The chain runs to 733 residues: Methylmalonyl-CoA mutase large subunit (733 aa).

Positions 1 to 10 (MRIPEFDDIE) are enriched in acidic residues. Residues 1–22 (MRIPEFDDIELGAGGGPSGSAE) are disordered. Positions 78, 81, 88, 90, 92, and 117 each coordinate (R)-methylmalonyl-CoA. Residues Phe-120 and Ala-142 each coordinate cob(II)alamin. Residues Thr-198 and Gln-200 each coordinate (R)-methylmalonyl-CoA. The cob(II)alamin site is built by Val-209 and Arg-210. (R)-methylmalonyl-CoA contacts are provided by Arg-210, His-247, Arg-286, and Ser-288. Positions 336, 373, 376, 612, 613, 614, 615, 658, 660, 689, and 712 each coordinate cob(II)alamin. Residues 600–732 (RPRILVAKMG…KRLAADLGHE (133 aa)) form the B12-binding domain.

Belongs to the methylmalonyl-CoA mutase family. As to quaternary structure, heterodimer of an alpha and a beta chain. Requires adenosylcob(III)alamin as cofactor.

It catalyses the reaction (R)-methylmalonyl-CoA = succinyl-CoA. In terms of biological role, catalyzes the isomerization of succinyl-CoA to methylmalonyl-CoA during synthesis of propionate from tricarboxylic acid-cycle intermediates. This conversion most likely represents an important source of building blocks for polyketide antibiotic biosynthesis. It is unable to catalyze the conversion of isobutyryl-CoA into N-butyryl-CoA. The chain is Methylmalonyl-CoA mutase large subunit (mutB) from Streptomyces virginiae (Streptomyces cinnamonensis).